The sequence spans 342 residues: tRNA dimethylallyltransferase (342 aa).

An ATP-binding site is contributed by 39–46 (GPTGSGKT). Residue 41-46 (TGSGKT) participates in substrate binding. The interval 64-67 (DSMQ) is interaction with substrate tRNA.

It belongs to the IPP transferase family. In terms of assembly, monomer. Mg(2+) is required as a cofactor.

It carries out the reaction adenosine(37) in tRNA + dimethylallyl diphosphate = N(6)-dimethylallyladenosine(37) in tRNA + diphosphate. Functionally, catalyzes the transfer of a dimethylallyl group onto the adenine at position 37 in tRNAs that read codons beginning with uridine, leading to the formation of N6-(dimethylallyl)adenosine (i(6)A). In Chlamydia felis (strain Fe/C-56) (Chlamydophila felis), this protein is tRNA dimethylallyltransferase.